The chain runs to 484 residues: Ribosomal RNA small subunit methyltransferase F (484 aa).

S-adenosyl-L-methionine is bound by residues 126 to 132, glutamate 150, aspartate 177, and aspartate 195; that span reads AAAPGSK. Cysteine 248 acts as the Nucleophile in catalysis.

The protein belongs to the class I-like SAM-binding methyltransferase superfamily. RsmB/NOP family.

Its subcellular location is the cytoplasm. The enzyme catalyses cytidine(1407) in 16S rRNA + S-adenosyl-L-methionine = 5-methylcytidine(1407) in 16S rRNA + S-adenosyl-L-homocysteine + H(+). Specifically methylates the cytosine at position 1407 (m5C1407) of 16S rRNA. This is Ribosomal RNA small subunit methyltransferase F from Pectobacterium atrosepticum (strain SCRI 1043 / ATCC BAA-672) (Erwinia carotovora subsp. atroseptica).